Consider the following 777-residue polypeptide: Lon protease (777 aa).

Residues 11 to 204 form the Lon N-terminal domain; that stretch reads IPVLPLRDVV…FLMAIMETEI (194 aa). 356-363 contributes to the ATP binding site; that stretch reads GPPGVGKT. The 182-residue stretch at 592-773 folds into the Lon proteolytic domain; the sequence is LNQIGQVVGL…EEVLKIALEN (182 aa). Catalysis depends on residues Ser-679 and Lys-722.

Belongs to the peptidase S16 family. In terms of assembly, homohexamer. Organized in a ring with a central cavity.

Its subcellular location is the cytoplasm. The catalysed reaction is Hydrolysis of proteins in presence of ATP.. In terms of biological role, ATP-dependent serine protease that mediates the selective degradation of mutant and abnormal proteins as well as certain short-lived regulatory proteins. Required for cellular homeostasis and for survival from DNA damage and developmental changes induced by stress. Degrades polypeptides processively to yield small peptide fragments that are 5 to 10 amino acids long. Binds to DNA in a double-stranded, site-specific manner. The chain is Lon protease from Buchnera aphidicola subsp. Schizaphis graminum (strain Sg).